The primary structure comprises 462 residues: MEYLPLFANLRQRTVLVVGGGNVAARKIQLLMRTGAHIKVVADDLCPELARIVNKKDINWIGKLFEPAMLDEVFLVIAATNNTKLNALVYKCAEKRHIFANIVDKQSYCSFIFPSIVDRSPIVVAISSSGKAPVLARILREKIETILPMFIGPMATLVGTWRNRIKQHIHNIAWRRRFWETILNGRFAHLISQGKWEHAEKEIESQLYHYQSPIGNVALVGAGPGDSGLLTLRGLQLMQQADIVLYDYLVSPEILDLVRRDADRIYVGKQAGKHSMPQAEINSLLVKLALQGKNVVRLKGGDPFIFGRGGEELQAVAAAGISFQVVPGITAASGATAYAGIPLTHREYAHSVIFITGHQCDDSSNYLNWSLLARSNQTLVIYMGVIQAAVIKKKLLAHGRALQTPVAVISRGTLKDQSVIIGTLEQLEMLTIQALSPTLLIIGEVVKISCEINWFGKIIKEQ.

The interval 1–203 (MEYLPLFANL…GKWEHAEKEI (203 aa)) is precorrin-2 dehydrogenase /sirohydrochlorin ferrochelatase. NAD(+) is bound by residues 22–23 (NV) and 43–44 (DD). Serine 128 is subject to Phosphoserine. Residues 215–462 (GNVALVGAGP…NWFGKIIKEQ (248 aa)) are uroporphyrinogen-III C-methyltransferase. Proline 224 is a binding site for S-adenosyl-L-methionine. The Proton acceptor role is filled by aspartate 247. Residue lysine 269 is the Proton donor of the active site. S-adenosyl-L-methionine is bound by residues 300–302 (GGD), isoleucine 305, 330–331 (TA), methionine 383, and glycine 412.

In the N-terminal section; belongs to the precorrin-2 dehydrogenase / sirohydrochlorin ferrochelatase family. The protein in the C-terminal section; belongs to the precorrin methyltransferase family.

The enzyme catalyses uroporphyrinogen III + 2 S-adenosyl-L-methionine = precorrin-2 + 2 S-adenosyl-L-homocysteine + H(+). It carries out the reaction precorrin-2 + NAD(+) = sirohydrochlorin + NADH + 2 H(+). The catalysed reaction is siroheme + 2 H(+) = sirohydrochlorin + Fe(2+). It functions in the pathway cofactor biosynthesis; adenosylcobalamin biosynthesis; precorrin-2 from uroporphyrinogen III: step 1/1. Its pathway is cofactor biosynthesis; adenosylcobalamin biosynthesis; sirohydrochlorin from precorrin-2: step 1/1. It participates in porphyrin-containing compound metabolism; siroheme biosynthesis; precorrin-2 from uroporphyrinogen III: step 1/1. The protein operates within porphyrin-containing compound metabolism; siroheme biosynthesis; siroheme from sirohydrochlorin: step 1/1. It functions in the pathway porphyrin-containing compound metabolism; siroheme biosynthesis; sirohydrochlorin from precorrin-2: step 1/1. In terms of biological role, multifunctional enzyme that catalyzes the SAM-dependent methylations of uroporphyrinogen III at position C-2 and C-7 to form precorrin-2 via precorrin-1. Then it catalyzes the NAD-dependent ring dehydrogenation of precorrin-2 to yield sirohydrochlorin. Finally, it catalyzes the ferrochelation of sirohydrochlorin to yield siroheme. In Baumannia cicadellinicola subsp. Homalodisca coagulata, this protein is Siroheme synthase.